The sequence spans 424 residues: Serine--tRNA ligase (424 aa).

230–232 (TAE) contributes to the L-serine binding site. Position 261-263 (261-263 (RSE)) interacts with ATP. Glutamate 284 contributes to the L-serine binding site. Position 348-351 (348-351 (EISS)) interacts with ATP. Serine 384 is an L-serine binding site.

Belongs to the class-II aminoacyl-tRNA synthetase family. Type-1 seryl-tRNA synthetase subfamily. As to quaternary structure, homodimer. The tRNA molecule binds across the dimer.

It localises to the cytoplasm. The catalysed reaction is tRNA(Ser) + L-serine + ATP = L-seryl-tRNA(Ser) + AMP + diphosphate + H(+). It carries out the reaction tRNA(Sec) + L-serine + ATP = L-seryl-tRNA(Sec) + AMP + diphosphate + H(+). It participates in aminoacyl-tRNA biosynthesis; selenocysteinyl-tRNA(Sec) biosynthesis; L-seryl-tRNA(Sec) from L-serine and tRNA(Sec): step 1/1. In terms of biological role, catalyzes the attachment of serine to tRNA(Ser). Is also able to aminoacylate tRNA(Sec) with serine, to form the misacylated tRNA L-seryl-tRNA(Sec), which will be further converted into selenocysteinyl-tRNA(Sec). This chain is Serine--tRNA ligase, found in Streptococcus pneumoniae (strain Hungary19A-6).